Reading from the N-terminus, the 645-residue chain is MEQINIQFPDGNKKAFDKGTTTEDIAQSISPGLRKKAVAGKFNGQLVDLTKPLETDGSIGIVTPGSEEALEVLRHSTAHLMAHAIKRLYGNVKFGVGPVIEGGFYYDFDIDQNISSDDFEQIEKTMKQIVNENMKIERKVVSRDEAKELFSNDEYKLELIDAIPEDENVTLYSQGDFTDLCRGVHVPSTAKIKEFKLLSTAGAYWRGDSNNKMLQRIYGTAFFDKKELKAHLQMLEERKERDHRKIGKELELFTNSQLVGAGLPLWLPNGATIRREIERYIVDKEVSMGYDHVYTPVLANVDLYKTSGHWDHYQEDMFPPMQLDETESMVLRPMNCPHHMMIYANKPHSYRELPIRIAELGTMHRYEASGAVSGLQRVRGMTLNDSHIFVRPDQIKEEFKRVVNMIIDVYKDFGFEDYSFRLSYRDPEDKEKYFDDDDMWNKAENMLKEAADELGLSYEEAIGEAAFYGPKLDVQVKTAMGKEETLSTAQLDFLLPERFDLTYIGQDGEHHRPVVIHRGVVSTMERFVAFLTEETKGAFPTWLAPKQVQIIPVNVDLHYDYARQLQDELKSQGVRVSIDDRNEKMGYKIREAQMQKIPYQIVVGDKEVENNQVNVRQYGSQDQETVEKDEFIWNLVDEIRLKKHR.

Positions 1–63 (MEQINIQFPD…ETDGSIGIVT (63 aa)) constitute a TGS domain. The interval 242 to 540 (DHRKIGKELE…LTEETKGAFP (299 aa)) is catalytic. Zn(2+) is bound by residues Cys-336, His-387, and His-517.

This sequence belongs to the class-II aminoacyl-tRNA synthetase family. In terms of assembly, homodimer. Requires Zn(2+) as cofactor.

It localises to the cytoplasm. It carries out the reaction tRNA(Thr) + L-threonine + ATP = L-threonyl-tRNA(Thr) + AMP + diphosphate + H(+). Functionally, catalyzes the attachment of threonine to tRNA(Thr) in a two-step reaction: L-threonine is first activated by ATP to form Thr-AMP and then transferred to the acceptor end of tRNA(Thr). Also edits incorrectly charged L-seryl-tRNA(Thr). The protein is Threonine--tRNA ligase of Staphylococcus aureus (strain Mu3 / ATCC 700698).